Consider the following 91-residue polypeptide: Small ribosomal subunit protein uS19 (91 aa).

The protein belongs to the universal ribosomal protein uS19 family.

In terms of biological role, protein S19 forms a complex with S13 that binds strongly to the 16S ribosomal RNA. In Synechococcus sp. (strain CC9902), this protein is Small ribosomal subunit protein uS19.